Consider the following 282-residue polypeptide: 3-methyl-2-oxobutanoate hydroxymethyltransferase (282 aa).

Residues Asp-44 and Asp-83 each contribute to the Mg(2+) site. 3-methyl-2-oxobutanoate is bound by residues 44–45 (DS), Asp-83, and Lys-113. A Mg(2+)-binding site is contributed by Glu-115. Catalysis depends on Glu-182, which acts as the Proton acceptor.

It belongs to the PanB family. Homodecamer; pentamer of dimers. Mg(2+) serves as cofactor.

It is found in the cytoplasm. It catalyses the reaction 3-methyl-2-oxobutanoate + (6R)-5,10-methylene-5,6,7,8-tetrahydrofolate + H2O = 2-dehydropantoate + (6S)-5,6,7,8-tetrahydrofolate. It participates in cofactor biosynthesis; (R)-pantothenate biosynthesis; (R)-pantoate from 3-methyl-2-oxobutanoate: step 1/2. Its function is as follows. Catalyzes the reversible reaction in which hydroxymethyl group from 5,10-methylenetetrahydrofolate is transferred onto alpha-ketoisovalerate to form ketopantoate. This Dehalococcoides mccartyi (strain ATCC BAA-2266 / KCTC 15142 / 195) (Dehalococcoides ethenogenes (strain 195)) protein is 3-methyl-2-oxobutanoate hydroxymethyltransferase.